Here is a 124-residue protein sequence, read N- to C-terminus: Thioredoxin domain-containing protein C21C3.12c (124 aa).

The 88-residue stretch at 37–124 folds into the Thioredoxin domain; it reads PWCPTVRAAL…ANKFSKFIDI (88 aa). The active-site Nucleophile is cysteine 39.

This sequence belongs to the thioredoxin family.

It is found in the cytoplasm. The protein localises to the nucleus. The polypeptide is Thioredoxin domain-containing protein C21C3.12c (Schizosaccharomyces pombe (strain 972 / ATCC 24843) (Fission yeast)).